We begin with the raw amino-acid sequence, 517 residues long: GMP synthase [glutamine-hydrolyzing] (517 aa).

One can recognise a Glutamine amidotransferase type-1 domain in the interval 9-202 (KIIVLDYGSQ…AFNVCKAKGD (194 aa)). The Nucleophile role is filled by Cys86. Residues His176 and Glu178 contribute to the active site. Positions 203–392 (WSMDSFIDME…LGMPDEIVWR (190 aa)) constitute a GMPS ATP-PPase domain. 230–236 (SGGVDSS) serves as a coordination point for ATP.

As to quaternary structure, homodimer.

It catalyses the reaction XMP + L-glutamine + ATP + H2O = GMP + L-glutamate + AMP + diphosphate + 2 H(+). Its pathway is purine metabolism; GMP biosynthesis; GMP from XMP (L-Gln route): step 1/1. In terms of biological role, catalyzes the synthesis of GMP from XMP. This Streptococcus mutans serotype c (strain ATCC 700610 / UA159) protein is GMP synthase [glutamine-hydrolyzing].